A 302-amino-acid polypeptide reads, in one-letter code: Coenzyme PQQ synthesis protein B (302 aa).

The protein belongs to the PqqB family.

It functions in the pathway cofactor biosynthesis; pyrroloquinoline quinone biosynthesis. Functionally, may be involved in the transport of PQQ or its precursor to the periplasm. In Azotobacter vinelandii (strain DJ / ATCC BAA-1303), this protein is Coenzyme PQQ synthesis protein B.